Reading from the N-terminus, the 680-residue chain is MLPQIPFLLLMFLTLVHGMFYAERYQTPTGIKGPLASPKTQYFIPYAIKSKGIPVRGEQGIPGPPGPTGPRGHPGPSGPPGKPGYGSPGLQGEPGLPGPPGISATGKPGLPGPPGKPGERGPYGHKGDIGPAGLPGPRGPPGPPGIPGPAGISVPGKPGQQGLTGAPGPRGFPGEKGAQGAPGVNGRKGETGYGSPGRPGERGLPGPQGPIGPPGPSGVGRRGENGFPGQPGIKGDRGFPGEMGPSGPPGPQGPPGKQGREGIGKPGAIGSPGQPGIPGEKGHPGAPGIAGPPGAPGFGKQGLPGLRGQRGPAGLPGAPGAKGERGPAGHPGEPGLPGSPGNMGPQGPKGIPGNHGIPGAKGEIGLVGPAGPPGARGARGPPGLDGKTGYPGEPGLNGPKGNPGLPGQKGDPGVGGTPGLRGPVGPVGAKGVPGHNGEAGPRGEPGIPGTRGPTGPPGVPGFPGSKGDPGNPGAPGPAGIATKGLNGPTGPPGPPGPRGHSGEPGLPGPPGPPGPPGQAVMPDGFIKAGQRPRLSGMPLVSANHGVTGMPVSAFTVILSKAYPAVGAPIPFDEILYNRQQHYDPRSGIFTCKIPGIYYFSYHVHVKGTHVWVGLYKNGTPTMYTYDEYSKGYLDQASGSAIMELTENDQVWLQLPNAESNGLYSSEYVHSSFSGFLVAPM.

The signal sequence occupies residues 1–18 (MLPQIPFLLLMFLTLVHG). The segment at 19–56 (MFYAERYQTPTGIKGPLASPKTQYFIPYAIKSKGIPVR) is nonhelical region (NC2). The segment at 54-531 (PVRGEQGIPG…PDGFIKAGQR (478 aa)) is disordered. A triple-helical region region spans residues 57–519 (GEQGIPGPPG…PGPPGPPGQA (463 aa)). Composition is skewed to pro residues over residues 137–147 (PRGPPGPPGIP) and 207–216 (PQGPIGPPGP). Low complexity-rich tracts occupy residues 303–321 (LPGLRGQRGPAGLPGAPGA), 373–382 (PGARGARGPP), and 391–409 (PGEPGLNGPKGNPGLPGQK). The span at 410–419 (GDPGVGGTPG) shows a compositional bias: gly residues. 2 stretches are compositionally biased toward low complexity: residues 423–433 (PVGPVGAKGVP) and 442–453 (RGEPGIPGTRGP). Over residues 506-516 (LPGPPGPPGPP) the composition is skewed to pro residues. The interval 520-680 (VMPDGFIKAG…SFSGFLVAPM (161 aa)) is nonhelical region (NC1). The 134-residue stretch at 547–680 (TGMPVSAFTV…SFSGFLVAPM (134 aa)) folds into the C1q domain. Aspartate 626, glutamate 627, leucine 633, and aspartate 634 together coordinate Ca(2+).

In terms of assembly, homotrimer. Post-translationally, prolines at the third position of the tripeptide repeating unit (G-X-Y) are hydroxylated in some or all of the chains.

The protein resides in the secreted. It is found in the extracellular space. The protein localises to the extracellular matrix. In terms of biological role, type X collagen is a product of hypertrophic chondrocytes and has been localized to presumptive mineralization zones of hyaline cartilage. The polypeptide is Collagen alpha-1(X) chain (Col10a1) (Mus musculus (Mouse)).